We begin with the raw amino-acid sequence, 243 residues long: MNSSTDNLFAKPYEQVSDFQFDDKVAGVFNDMIRRSVPGYGQIINTIGDLAQKYAATNTKIYDLGCSLGAATLSIRRRVEGRNCQIVAIDNSESMIERCNENLSAYVSETPVELICGDIRDIKIENASLVVLNFTMQFLSPDDRENLLENIYQGLIPGGLLILSEKLYFKEDKIQSTLDDLHLDFKRANGYSELEISQKRSSLENVMKPDTLAEHENRIRSLGFSQFSVWFQCFNFASMVAIK.

Residues Tyr-40, 65–67, 90–91, 118–119, Asn-133, and Arg-200 contribute to the S-adenosyl-L-methionine site; these read GCS, DN, and DI.

The protein belongs to the class I-like SAM-binding methyltransferase superfamily. Cx-SAM synthase family. Homodimer.

The catalysed reaction is prephenate + S-adenosyl-L-methionine = carboxy-S-adenosyl-L-methionine + 3-phenylpyruvate + H2O. Catalyzes the conversion of S-adenosyl-L-methionine (SAM) to carboxy-S-adenosyl-L-methionine (Cx-SAM). This is Carboxy-S-adenosyl-L-methionine synthase from Shewanella halifaxensis (strain HAW-EB4).